We begin with the raw amino-acid sequence, 501 residues long: UDP-N-acetylmuramate--L-alanine ligase (501 aa).

130-136 serves as a coordination point for ATP; the sequence is GTHGKTS.

Belongs to the MurCDEF family.

It localises to the cytoplasm. It catalyses the reaction UDP-N-acetyl-alpha-D-muramate + L-alanine + ATP = UDP-N-acetyl-alpha-D-muramoyl-L-alanine + ADP + phosphate + H(+). It functions in the pathway cell wall biogenesis; peptidoglycan biosynthesis. Its function is as follows. Cell wall formation. This chain is UDP-N-acetylmuramate--L-alanine ligase, found in Nocardia farcinica (strain IFM 10152).